A 396-amino-acid polypeptide reads, in one-letter code: MTHISNNRPRIAVIGGGIAGLTVAASLLRAGIECTVYEQATVFADAGAGIQIAPNSARILHRLGLAGALERRATRAHAIETRRWQDGAPLARTELGEPCVERYGAPYYLIQRADLHRSLLELLPPGVVRHSAACTAVEERPDGVTLRFADGTSEEAGVVVGADGIHSALRNHLVGDRPRFSGHTVHRGLVAADRLPSLFEVPKVLFWLGPNGHVTSYPIAQHGLVHFSAVITSPEWDPEVWSAPSRPGEAAAAFAGWNAEVAELIGAAEQAHHWALFDRDCVGGWSTGRMTLAGDAAHPMVPYLSQGANQAIEDAWVLADLLGAADLDPGPALRRYEELRLPRVREVHRRSRERGHEFHLPDGPQQRLRDRSMPTAERLDDYAWIYGFEAAPVGSR.

FAD contacts are provided by residues alanine 19, 38-39 (EQ), and arginine 112. Tyrosine 217 functions as the Proton acceptor in the catalytic mechanism. Aspartate 295 contacts FAD. Residues 352 to 371 (RERGHEFHLPDGPQQRLRDR) form a disordered region.

The protein belongs to the 6-hydroxynicotinate 3-monooxygenase family. FAD serves as cofactor.

It carries out the reaction 3-amino-4-hydroxybenzoate + NADPH + O2 + H(+) = 3-amino-2,4-dihydroxybenzoate + NADP(+) + H2O. It functions in the pathway antibiotic biosynthesis. Functionally, part of a gene cluster involved in the biosynthesis of thioplatensimycin (thioPTM) and platensimycin (PTM), potent and selective inhibitors of bacterial and mammalian fatty acid synthases. Catalyzes the hydroxylation of 3-amino-4-hydroxybenzoate (3,4-AHBA) to 3-amino-2,4-dihydroxybenzoate (3,2,4-ADHBA). The polypeptide is 3-amino-4-hydroxybenzoate 2-monooxygenase PtmB3 (Streptomyces platensis).